A 380-amino-acid chain; its full sequence is RNA binding protein fox-1 homolog 2 (380 aa).

Polar residues-rich tracts occupy residues 1–20 (MEKN…TPDT) and 36–56 (NGLS…QSTE). Residues 1 to 117 (MEKNKMVSQG…TPKRLHVSNI (117 aa)) form a disordered region. A compositionally biased stretch (low complexity) spans 72-102 (STPATSTANASSTTDGSQTEGQQSQTQNSEN). The RRM domain maps to 110 to 186 (KRLHVSNIPF…RKIEVNNATA (77 aa)).

The protein localises to the nucleus. It is found in the cytoplasm. Functionally, RNA-binding protein that regulates alternative splicing events by binding to 5'-UGCAUGU-3' elements. Regulates alternative splicing of tissue-specific exons. This Xenopus tropicalis (Western clawed frog) protein is RNA binding protein fox-1 homolog 2 (rbfox2).